Consider the following 368-residue polypeptide: Anti-sigma-X factor RsiX (368 aa).

A compositionally biased stretch (polar residues) spans 73–87 (QPQQKEASQENAVTK). The interval 73 to 101 (QPQQKEASQENAVTKTETEDSPKAASSLD) is disordered.

It localises to the cell membrane. Functionally, the anti-sigma factor for extracytoplasmic function (ECF) sigma factor SigX, inhibits SigX activity and stabilizes it. The polypeptide is Anti-sigma-X factor RsiX (rsiX) (Bacillus subtilis (strain 168)).